Consider the following 375-residue polypeptide: Chaperone protein DnaJ (375 aa).

One can recognise a J domain in the interval 5 to 70 (DYYDVLGVNR…QKRGAYDQFG (66 aa)). A CR-type zinc finger spans residues 135–213 (GCEKQIRIPS…CHGAGQKKTT (79 aa)). Zn(2+) contacts are provided by cysteine 148, cysteine 151, cysteine 165, cysteine 168, cysteine 187, cysteine 190, cysteine 201, and cysteine 204. 4 CXXCXGXG motif repeats span residues 148-155 (CSTCNGTG), 165-172 (CATCGGHG), 187-194 (CPTCHGTG), and 201-208 (CGSCHGAG).

This sequence belongs to the DnaJ family. In terms of assembly, homodimer. Requires Zn(2+) as cofactor.

The protein resides in the cytoplasm. In terms of biological role, participates actively in the response to hyperosmotic and heat shock by preventing the aggregation of stress-denatured proteins and by disaggregating proteins, also in an autonomous, DnaK-independent fashion. Unfolded proteins bind initially to DnaJ; upon interaction with the DnaJ-bound protein, DnaK hydrolyzes its bound ATP, resulting in the formation of a stable complex. GrpE releases ADP from DnaK; ATP binding to DnaK triggers the release of the substrate protein, thus completing the reaction cycle. Several rounds of ATP-dependent interactions between DnaJ, DnaK and GrpE are required for fully efficient folding. Also involved, together with DnaK and GrpE, in the DNA replication of plasmids through activation of initiation proteins. This chain is Chaperone protein DnaJ, found in Chromobacterium violaceum (strain ATCC 12472 / DSM 30191 / JCM 1249 / CCUG 213 / NBRC 12614 / NCIMB 9131 / NCTC 9757 / MK).